The primary structure comprises 92 residues: Progonadoliberin-1 (92 aa).

The first 23 residues, 1–23, serve as a signal peptide directing secretion; that stretch reads METIPKLMAAVVLLTVCLEGCSS. Q24 bears the Pyrrolidone carboxylic acid mark. G33 carries the post-translational modification Glycine amide.

Belongs to the GnRH family. In terms of processing, the precursor is cleaved by ACE, which removes the Gly-Lys-Arg peptide at the C-terminus, leading to mature hormone. The mature form of Gonadoliberin-1 is also cleaved and degraded by ACE. In terms of tissue distribution, central nervous system.

Its subcellular location is the secreted. Stimulates the secretion of gonadotropins; it stimulates the secretion of both luteinizing and follicle-stimulating hormones. The protein is Progonadoliberin-1 (Gnrh1) of Rattus norvegicus (Rat).